The following is a 416-amino-acid chain: 4-hydroxy-3-methylbut-2-en-1-yl diphosphate synthase (flavodoxin) (416 aa).

Residues C304, C307, C350, and E357 each contribute to the [4Fe-4S] cluster site.

It belongs to the IspG family. The cofactor is [4Fe-4S] cluster.

The enzyme catalyses (2E)-4-hydroxy-3-methylbut-2-enyl diphosphate + oxidized [flavodoxin] + H2O + 2 H(+) = 2-C-methyl-D-erythritol 2,4-cyclic diphosphate + reduced [flavodoxin]. Its pathway is isoprenoid biosynthesis; isopentenyl diphosphate biosynthesis via DXP pathway; isopentenyl diphosphate from 1-deoxy-D-xylulose 5-phosphate: step 5/6. Converts 2C-methyl-D-erythritol 2,4-cyclodiphosphate (ME-2,4cPP) into 1-hydroxy-2-methyl-2-(E)-butenyl 4-diphosphate. This is 4-hydroxy-3-methylbut-2-en-1-yl diphosphate synthase (flavodoxin) from Rhizobium etli (strain CIAT 652).